Consider the following 110-residue polypeptide: UPF0122 protein YlxM (110 aa).

The protein belongs to the UPF0122 family.

In terms of biological role, might take part in the signal recognition particle (SRP) pathway. This is inferred from the conservation of its genetic proximity to ftsY/ffh. May be a regulatory protein. The chain is UPF0122 protein YlxM (ylxM) from Bacillus subtilis (strain 168).